Consider the following 109-residue polypeptide: Phosphoribosyl-AMP cyclohydrolase (109 aa).

Aspartate 80 serves as a coordination point for Mg(2+). Position 81 (cysteine 81) interacts with Zn(2+). 2 residues coordinate Mg(2+): aspartate 82 and aspartate 84. Residues cysteine 97 and cysteine 104 each coordinate Zn(2+).

The protein belongs to the PRA-CH family. In terms of assembly, homodimer. Mg(2+) serves as cofactor. Zn(2+) is required as a cofactor.

The protein localises to the cytoplasm. It catalyses the reaction 1-(5-phospho-beta-D-ribosyl)-5'-AMP + H2O = 1-(5-phospho-beta-D-ribosyl)-5-[(5-phospho-beta-D-ribosylamino)methylideneamino]imidazole-4-carboxamide. Its pathway is amino-acid biosynthesis; L-histidine biosynthesis; L-histidine from 5-phospho-alpha-D-ribose 1-diphosphate: step 3/9. Its function is as follows. Catalyzes the hydrolysis of the adenine ring of phosphoribosyl-AMP. In Clostridium botulinum (strain Alaska E43 / Type E3), this protein is Phosphoribosyl-AMP cyclohydrolase.